A 638-amino-acid chain; its full sequence is Lactose permease (638 aa).

The segment at 1 to 470 (MHNHKVSGKQ…AQVIEELKSK (470 aa)) is permease. The next 12 membrane-spanning stretches (helical) occupy residues 27–47 (FYGV…FSGL), 56–76 (IGLI…IDPI), 94–114 (WILI…TGIF), 121–141 (WILF…FYSL), 166–186 (LGAF…VPLV), 204–224 (WFAF…IVCF), 261–281 (LAYL…FYMY), 291–311 (FWVV…SFPV), 320–340 (WLFI…IFGH), 343–363 (VFLM…LVTV), 395–415 (FAGA…GMTG), and 429–449 (TFNM…IVVF). The 108-residue stretch at 503-610 (SSVVDEDGKP…KDTIVIFYTQ (108 aa)) folds into the PTS EIIA type-1 domain. His-558 is modified (phosphohistidine; by HPr).

The protein in the N-terminal section; belongs to the sodium:galactoside symporter (TC 2.A.2) family.

It is found in the cell membrane. In terms of biological role, responsible for transport of beta-galactosides into the cell, with the concomitant uptake of protons (symport system), and also for transport of homologous and heterologous exchange of beta-galactosides. This Lactobacillus helveticus (Lactobacillus suntoryeus) protein is Lactose permease (lacS).